A 538-amino-acid polypeptide reads, in one-letter code: Putative cysteine ligase BshC (538 aa).

Residues 460–484 (KINEQIELLERMLKRNVEKKHEVEL) are a coiled coil.

The protein belongs to the BshC family.

Functionally, involved in bacillithiol (BSH) biosynthesis. May catalyze the last step of the pathway, the addition of cysteine to glucosamine malate (GlcN-Mal) to generate BSH. This chain is Putative cysteine ligase BshC, found in Bacillus cereus (strain AH820).